Consider the following 454-residue polypeptide: N-acetyl-S-(2-succino)cysteine lyase (454 aa).

Residue 106 to 107 (TT) coordinates fumarate. The active-site Proton donor/acceptor is histidine 154. Residue arginine 233 coordinates fumarate. Residue serine 277 is the Proton donor/acceptor of the active site. Fumarate contacts are provided by residues threonine 278 and 283-285 (KRN).

It belongs to the lyase 1 family.

It carries out the reaction N-acetyl-S-(2-succino)-L-cysteine = N-acetyl-L-cysteine + fumarate. It participates in amino-acid biosynthesis; L-cysteine biosynthesis. Its function is as follows. Catalyzes the cleavage of N-acetyl-S-(2-succino)cysteine into fumarate and N-acetylcysteine. Is involved in a S-(2-succino)cysteine (2SC) degradation pathway that allows the bacterium to recover cysteine from 2SC and to detoxify 2SC that may be a toxic metabolite. Can also perform the reverse reaction in vitro, and has minor activity against 2SC and other small molecule thiols. In Dickeya dadantii (strain 3937) (Erwinia chrysanthemi (strain 3937)), this protein is N-acetyl-S-(2-succino)cysteine lyase.